Here is a 117-residue protein sequence, read N- to C-terminus: MISIILVMIGGGLGAIARSAITDYFNHKFTSKLPIATLIVNLVGSFLIGLTIGLSISISWFPAFFVTGFLGGLTTFSTLAKELTLMMTPKFNINLFLNYSLLQFIIGFIACYIGYHI.

Helical transmembrane passes span 1–21 and 46–66; these read MISI…RSAI and FLIG…AFFV. Na(+) contacts are provided by glycine 71 and threonine 74. Residues 95 to 115 traverse the membrane as a helical segment; it reads LFLNYSLLQFIIGFIACYIGY.

It belongs to the fluoride channel Fluc/FEX (TC 1.A.43) family.

It localises to the cell membrane. The catalysed reaction is fluoride(in) = fluoride(out). Na(+) is not transported, but it plays an essential structural role and its presence is essential for fluoride channel function. In terms of biological role, fluoride-specific ion channel. Important for reducing fluoride concentration in the cell, thus reducing its toxicity. The chain is Fluoride-specific ion channel FluC 2 from Staphylococcus aureus (strain MRSA252).